Here is a 110-residue protein sequence, read N- to C-terminus: Small ubiquitin-related modifier 3 (110 aa).

Glycyl lysine isopeptide (Lys-Gly) (interchain with G-Cter in SUMO2) cross-links involve residues Lys5 and Lys7. Lys11 is covalently cross-linked (Glycyl lysine isopeptide (Lys-Gly) (interchain with G-Cter in SUMO); alternate). Lys11 is covalently cross-linked (Glycyl lysine isopeptide (Lys-Gly) (interchain with G-Cter in SUMO2); alternate). A Ubiquitin-like domain is found at 15–92 (DHINLKVAGQ…IDVFQQQTGG (78 aa)). Over residues 89–101 (QTGGTASRASVPT) the composition is skewed to polar residues. Residues 89–110 (QTGGTASRASVPTPSHFPDICY) form a disordered region. Gly92 is covalently cross-linked (Glycyl lysine isopeptide (Gly-Lys) (interchain with K-? in acceptor proteins)). Positions 93-110 (TASRASVPTPSHFPDICY) are excised as a propeptide.

It belongs to the ubiquitin family. SUMO subfamily. As to quaternary structure, interacts with SAE2 and UBE2I. Covalently attached to a number of proteins. Interacts with USP25 (via ts SIM domain); the interaction sumoylates USP25 and inhibits its ubiquitin hydrolyzing activity. Interacts with BMAL1. Post-translationally, polymeric chains can be formed through Lys-11 cross-linking. Cleavage of precursor form by SENP1, SENP2 or SENP5 is necessary for function.

Its subcellular location is the cytoplasm. The protein localises to the nucleus. It is found in the PML body. Ubiquitin-like protein which can be covalently attached to target lysines either as a monomer or as a lysine-linked polymer. Does not seem to be involved in protein degradation and may function as an antagonist of ubiquitin in the degradation process. Plays a role in a number of cellular processes such as nuclear transport, DNA replication and repair, mitosis and signal transduction. Covalent attachment to its substrates requires prior activation by the E1 complex SAE1-SAE2 and linkage to the E2 enzyme UBE2I, and can be promoted by an E3 ligase such as PIAS1-4, RANBP2 or CBX4. Plays a role in the regulation of sumoylation status of SETX. The protein is Small ubiquitin-related modifier 3 (Sumo3) of Rattus norvegicus (Rat).